The primary structure comprises 386 residues: Protein RETICULATA-RELATED 4, chloroplastic (386 aa).

The N-terminal 61 residues, 1-61, are a transit peptide targeting the chloroplast; it reads MAIASCFFCV…RRVPITPVLS (61 aa). The segment at 61 to 99 is disordered; it reads SASSGNGGSDNNGGGLSGGGGGGDGGKNDGDGHGDEDRD. The span at 65–85 shows a compositional bias: gly residues; the sequence is GNGGSDNNGGGLSGGGGGGDG. Basic and acidic residues predominate over residues 86 to 99; sequence GKNDGDGHGDEDRD. The next 2 membrane-spanning stretches (helical) occupy residues 201–221 and 273–293; these read VVFADVAMAIIADFMLVYLPA and KLFAVGTTSSLVGTAITNAFI.

The protein belongs to the RETICULATA family.

It localises to the plastid. Its subcellular location is the chloroplast membrane. Functionally, may play a role in leaf development. The polypeptide is Protein RETICULATA-RELATED 4, chloroplastic (Arabidopsis thaliana (Mouse-ear cress)).